The primary structure comprises 356 residues: NADH-quinone oxidoreductase subunit H (356 aa).

8 consecutive transmembrane segments (helical) span residues isoleucine 18–isoleucine 38, glycine 87–isoleucine 107, valine 120–glycine 140, isoleucine 166–valine 186, tryptophan 202–valine 222, alanine 265–isoleucine 285, tryptophan 292–methionine 312, and leucine 328–leucine 348.

This sequence belongs to the complex I subunit 1 family. In terms of assembly, NDH-1 is composed of 14 different subunits. Subunits NuoA, H, J, K, L, M, N constitute the membrane sector of the complex.

It localises to the cell inner membrane. It carries out the reaction a quinone + NADH + 5 H(+)(in) = a quinol + NAD(+) + 4 H(+)(out). Functionally, NDH-1 shuttles electrons from NADH, via FMN and iron-sulfur (Fe-S) centers, to quinones in the respiratory chain. The immediate electron acceptor for the enzyme in this species is believed to be ubiquinone. Couples the redox reaction to proton translocation (for every two electrons transferred, four hydrogen ions are translocated across the cytoplasmic membrane), and thus conserves the redox energy in a proton gradient. This subunit may bind ubiquinone. The protein is NADH-quinone oxidoreductase subunit H of Nitrobacter hamburgensis (strain DSM 10229 / NCIMB 13809 / X14).